We begin with the raw amino-acid sequence, 103 residues long: Cell division suppressor protein YneA (103 aa).

Residues 36–87 (VKIKVQDGDTLWSLADHVAEKKHINKEDFIEWVTENNHLQTADIKPGDELIL) form the LysM domain.

Belongs to the YneA family.

The protein localises to the cytoplasm. Its function is as follows. Inhibits cell division during the SOS response. Affects a later stage of the cell division protein assembly, after the assembly of the Z ring, by probably suppressing recruitment of FtsL and/or DivIC to the division machinery. The polypeptide is Cell division suppressor protein YneA (Bacillus velezensis (strain DSM 23117 / BGSC 10A6 / LMG 26770 / FZB42) (Bacillus amyloliquefaciens subsp. plantarum)).